The primary structure comprises 172 residues: uncharacterized protein (172 aa).

Residues R22 to R64 form a disordered region.

This is an uncharacterized protein from Human cytomegalovirus (strain AD169) (HHV-5).